Here is a 285-residue protein sequence, read N- to C-terminus: Energy-coupling factor transporter ATP-binding protein EcfA1 (285 aa).

An ABC transporter domain is found at 9 to 246 (VTVEHLSFTY…VSLIKNAGLD (238 aa)). 43-50 (GHNGSGKS) serves as a coordination point for ATP.

It belongs to the ABC transporter superfamily. Energy-coupling factor EcfA family. As to quaternary structure, forms a stable energy-coupling factor (ECF) transporter complex composed of 2 membrane-embedded substrate-binding proteins (S component), 2 ATP-binding proteins (A component) and 2 transmembrane proteins (T component).

It localises to the cell membrane. ATP-binding (A) component of a common energy-coupling factor (ECF) ABC-transporter complex. Unlike classic ABC transporters this ECF transporter provides the energy necessary to transport a number of different substrates. In Lactobacillus gasseri (strain ATCC 33323 / DSM 20243 / BCRC 14619 / CIP 102991 / JCM 1131 / KCTC 3163 / NCIMB 11718 / NCTC 13722 / AM63), this protein is Energy-coupling factor transporter ATP-binding protein EcfA1.